A 213-amino-acid polypeptide reads, in one-letter code: Peroxynitrite isomerase (213 aa).

The span at 1-10 (MGADATGDTA) shows a compositional bias: low complexity. The segment at 1-26 (MGADATGDTAARGDRAAHGDTASGGA) is disordered. The GXWXGXG motif lies at 51-57 (GTWRGEG). Histidine 203 contacts heme b.

Belongs to the nitrobindin family. As to quaternary structure, homodimer. Requires heme b as cofactor.

It carries out the reaction peroxynitrite = nitrate. It functions in the pathway nitrogen metabolism. In terms of biological role, heme-binding protein able to scavenge peroxynitrite and to protect free L-tyrosine against peroxynitrite-mediated nitration, by acting as a peroxynitrite isomerase that converts peroxynitrite to nitrate. Therefore, this protein likely plays a role in peroxynitrite sensing and in the detoxification of reactive nitrogen and oxygen species (RNS and ROS, respectively). Is able to bind nitric oxide (NO) in vitro, but may act as a sensor of peroxynitrite levels in vivo. The chain is Peroxynitrite isomerase from Parafrankia sp. (strain EAN1pec).